Here is a 1020-residue protein sequence, read N- to C-terminus: Contactin-1 (1020 aa).

Residues 1-20 (MKMPLLVSHLLLISLTSCLG) form the signal peptide. 6 consecutive Ig-like C2-type domains span residues 41–131 (PIFE…ATLS), 137–223 (PFPP…KSVF), 241–326 (PADI…ARIY), 331–407 (PEWV…AELK), 413–500 (PTFE…GTLV), and 504–603 (PTRI…LVVR). 2 disulfide bridges follow: Cys65–Cys114 and Cys158–Cys211. N-linked (GlcNAc...) asparagine glycans are attached at residues Asn208 and Asn258. The cysteines at positions 263 and 310 are disulfide-linked. Residue Asn338 is glycosylated (N-linked (GlcNAc...) asparagine). 2 disulfide bridges follow: Cys352-Cys391 and Cys436-Cys484. 4 N-linked (GlcNAc...) asparagine glycosylation sites follow: Asn457, Asn473, Asn494, and Asn521. An intrachain disulfide couples Cys526 to Cys585. Asn593 is a glycosylation site (N-linked (GlcNAc...) asparagine). Fibronectin type-III domains follow at residues 608 to 706 (PPGG…TDGA), 711 to 808 (APSD…SAQD), 813 to 908 (APTE…APPS), and 909 to 1002 (QPPR…TLSS). The segment at 695 to 719 (SIPSNRIKTDGAAPNVAPSDVGGGG) is disordered. N-linked (GlcNAc...) asparagine glycosylation occurs at Asn935. Ser1001 carries GPI-anchor amidated serine lipidation. Positions 1002 to 1020 (SSLLSLLLPSLGFLVYSEF) are cleaved as a propeptide — removed in mature form.

This sequence belongs to the immunoglobulin superfamily. Contactin family. In terms of assembly, monomer. Interacts with CNTNAP1 in cis form. Binds to the carbonic-anhydrase like domain of PTPRZ1. Interacts with NOTCH1 and TNR. Detected in a complex with NRCAM and PTPRB. Interacts with TASOR. As to expression, expressed in the ovary and in Sertoli cells of the testis.

The protein localises to the cell membrane. Its function is as follows. Contactins mediate cell surface interactions during nervous system development. Involved in the formation of paranodal axo-glial junctions in myelinated peripheral nerves and in the signaling between axons and myelinating glial cells via its association with CNTNAP1. Participates in oligodendrocytes generation by acting as a ligand of NOTCH1. Its association with NOTCH1 promotes NOTCH1 activation through the released notch intracellular domain (NICD) and subsequent translocation to the nucleus. Interaction with TNR induces a repulsion of neurons and an inhibition of neurite outgrowth. This chain is Contactin-1 (Cntn1), found in Mus musculus (Mouse).